A 362-amino-acid polypeptide reads, in one-letter code: Phosphoserine aminotransferase (362 aa).

An L-glutamate-binding site is contributed by Arg-42. Pyridoxal 5'-phosphate contacts are provided by Trp-102, Thr-154, Asp-174, and Gln-197. N6-(pyridoxal phosphate)lysine is present on Lys-198. Residue 239-240 coordinates pyridoxal 5'-phosphate; sequence NT.

Belongs to the class-V pyridoxal-phosphate-dependent aminotransferase family. SerC subfamily. As to quaternary structure, homodimer. Requires pyridoxal 5'-phosphate as cofactor.

It localises to the cytoplasm. It carries out the reaction O-phospho-L-serine + 2-oxoglutarate = 3-phosphooxypyruvate + L-glutamate. The enzyme catalyses 4-(phosphooxy)-L-threonine + 2-oxoglutarate = (R)-3-hydroxy-2-oxo-4-phosphooxybutanoate + L-glutamate. The protein operates within amino-acid biosynthesis; L-serine biosynthesis; L-serine from 3-phospho-D-glycerate: step 2/3. It functions in the pathway cofactor biosynthesis; pyridoxine 5'-phosphate biosynthesis; pyridoxine 5'-phosphate from D-erythrose 4-phosphate: step 3/5. Catalyzes the reversible conversion of 3-phosphohydroxypyruvate to phosphoserine and of 3-hydroxy-2-oxo-4-phosphonooxybutanoate to phosphohydroxythreonine. The protein is Phosphoserine aminotransferase of Haemophilus ducreyi (strain 35000HP / ATCC 700724).